Here is a 681-residue protein sequence, read N- to C-terminus: Mitosis inhibitor nif1 (681 aa).

The tract at residues 22 to 43 (LNKKDGNDDDKAEHSKRSGYHG) is disordered. Residues 23-37 (NKKDGNDDDKAEHSK) show a composition bias toward basic and acidic residues. Residue S70 is modified to Phosphoserine. 2 disordered regions span residues 80-104 (TTSGSSSDLLNIESPASPAEASSPF) and 182-324 (YYHE…SSRQ). Residues 92 to 103 (ESPASPAEASSP) are compositionally biased toward low complexity. The segment covering 191 to 203 (TASNTSPTPNSIK) has biased composition (polar residues). Phosphoserine is present on S196. A compositionally biased stretch (low complexity) spans 238–278 (SSGDSTPLSGSSSSKGMLMSMSTSENHSLSSNPELSNSNLL). Residues 296 to 306 (SSKEPDKEHST) are compositionally biased toward basic and acidic residues. Sel1-like repeat units follow at residues 547–582 (ALILYELGVCFMHGWGITRDRYLALHLIKLSGAWGD) and 583–618 (ADAQFEAGLQMSLGAVSDKDSHMAAYYYRLAGFQGI).

The protein resides in the cytoplasm. Its function is as follows. Functions as a negative regulator of mitosis. It interacts with the C-terminal of nim1, thereby inhibiting its kinase activity which phosphorylates wee1. In Schizosaccharomyces pombe (strain 972 / ATCC 24843) (Fission yeast), this protein is Mitosis inhibitor nif1 (nif1).